The chain runs to 353 residues: Protein U67 (353 aa).

Belongs to the herpesviridae UL95 family.

This chain is Protein U67 (U67), found in Human herpesvirus 6A (strain Uganda-1102) (HHV-6 variant A).